A 259-amino-acid chain; its full sequence is Eukaryotic translation initiation factor 3 subunit G-2 (259 aa).

The region spanning 179-257 is the RRM domain; the sequence is SAVRISNLSE…LILSVEWSKP (79 aa).

It belongs to the eIF-3 subunit G family. Component of the eukaryotic translation initiation factor 3 (eIF-3) complex. The eIF-3 complex interacts with pix.

Its subcellular location is the cytoplasm. Functionally, RNA-binding component of the eukaryotic translation initiation factor 3 (eIF-3) complex, which is involved in protein synthesis of a specialized repertoire of mRNAs and, together with other initiation factors, stimulates binding of mRNA and methionyl-tRNAi to the 40S ribosome. The eIF-3 complex specifically targets and initiates translation of a subset of mRNAs involved in cell proliferation. This subunit can bind 18S rRNA. In Drosophila virilis (Fruit fly), this protein is Eukaryotic translation initiation factor 3 subunit G-2.